We begin with the raw amino-acid sequence, 549 residues long: Chaperonin GroEL (549 aa).

ATP contacts are provided by residues 29-32 (TAGP), K50, 86-90 (DGTTT), G418, and D499.

Belongs to the chaperonin (HSP60) family. In terms of assembly, forms a cylinder of 14 subunits composed of two heptameric rings stacked back-to-back. Interacts with the co-chaperonin GroES.

The protein resides in the cytoplasm. It catalyses the reaction ATP + H2O + a folded polypeptide = ADP + phosphate + an unfolded polypeptide.. Its function is as follows. Together with its co-chaperonin GroES, plays an essential role in assisting protein folding. The GroEL-GroES system forms a nano-cage that allows encapsulation of the non-native substrate proteins and provides a physical environment optimized to promote and accelerate protein folding. In Wolbachia sp. subsp. Drosophila simulans (strain wRi), this protein is Chaperonin GroEL.